A 341-amino-acid chain; its full sequence is UDP-N-acetylenolpyruvoylglucosamine reductase (341 aa).

The FAD-binding PCMH-type domain occupies 15-185 (VTQSCLSLIE…TAVGLRLPKT (171 aa)). Residue Arg161 is part of the active site. Catalysis depends on Ser231, which acts as the Proton donor. Residue Glu327 is part of the active site.

This sequence belongs to the MurB family. The cofactor is FAD.

The protein localises to the cytoplasm. The enzyme catalyses UDP-N-acetyl-alpha-D-muramate + NADP(+) = UDP-N-acetyl-3-O-(1-carboxyvinyl)-alpha-D-glucosamine + NADPH + H(+). It functions in the pathway cell wall biogenesis; peptidoglycan biosynthesis. In terms of biological role, cell wall formation. In Shewanella oneidensis (strain ATCC 700550 / JCM 31522 / CIP 106686 / LMG 19005 / NCIMB 14063 / MR-1), this protein is UDP-N-acetylenolpyruvoylglucosamine reductase.